Consider the following 2286-residue polypeptide: IMSCHDVGGRRRFEDSEFTLRVYPGSLSESTIYCPVSARKVTTAAEVIERVIERLQLDRTRLYVLAEVKEFGGEEWILNPSDCPAQRMMLWPRMALENRLLGEDYRFLLREKNLDGSIHYGSLQMWLRVTEERRRMVERGLLPQPPAAQFVADLCSLPDLNEHTMLENLRGRFRQENIYTYVGSILIAVNPFKFLPIYNPKYVKMYDKHRLGQLEPHIFAVADAAYHAMLQRHRNQCIVISGESGSGKTQSTNFLIHHLTALSQKGFASGVEQIILGAGPVLEAFGNAKTAHNNNSSRFGKFIQVNYQESGTVRGAYVEKYLLEKSRLVYQEHNERCSCVNIFSKLVCHELKVCVCMCVQDCFSVEAEDLKHDFERLQLAMEMVGFLPTTRKQIFSLLSAILHLGNIRYKKKTFRDDSIDICNPEVLPIVSELLEVKEEMLFEALTTRKTVTVGERLIVPYKLAEVRKGTSHQLIQTFRTSHSLLHQRYFHIHTSPTRILSIGVLDIFGFEDYENNSFEQFCINFANETLQHYFNQHVFKLEQEEYRSEGINWHMIDYIDNTACINLISKKPTALLHLLDEECNFPQASNQTLLDKFKRQHEGNAYMEFPAVMEPAFIIRHYAGKVKYSVKDFREKNTDHLRPDIVSLLKSSRKAFICGLMGLDPVASFRWAVIRAFFRALVAFRHAGLQHRDNRSSSDVHLQPQKSVDSFSFLHHPVHQRSLEILQRCKDDRYNSCVSRRSPRTPLSDLQGANTFSSNGRGWRSERVSSFAHEDEGIFVNSVNNRLLERAQGILMRNKNYKPKPSLPKHLLDVKSLKYLSSLTLHDRITKSLLHLHKKKKPPSISAQFNVSLNKLMETLGQSEPYFVKCIRSNAEKLPLRFNDALVLRQLRYTGMLETVRIRQSGYSVKYSFKDFAHHFHVLLPAGFSASQMGIREFLRSADLEPSGYQVGRSMVFLHERLRQRLQDELHQEVLRRIVCLQRSFRTQRDRKHFCRQRRAARLIQRWWRSCISQADGSVCALELQQGAALRLQAVWRGFRARRLYLQQRRAVLIIQRCWRRVLNTRNTAATLIQAVWRTRTHRRSFLQQRRAAVTLQAACRGQQSRQRCRILREQQCREQSKHPSTVTKSLHQNTEEAEKLEEVWEKQTTDPPPKAVDDSTLKSRNKRESRRQRELEQATFSLELLKVRSGSNTEDAQIPPSKHHPPHQASTDSQESFELLENEDSASAKLELSKSEPMEVNQTSPAASFKPHFYIPDEDGSPINSAPQTPNRAKQIREKKESVVVIISMQKENPVDRSSLQTLEAQDVPLSNGESASDCSIIPEPRTNHELDTGSSFSVSSKPLQLDLRSAASNEEPSEPKADVQKKFVSQSISISMKETAANVAFPPKRSRLTFSKSDKDLVNQERSLAIQREAGFRSLKNRDVTRAGCKKKARMARTRSDFLSRACSTEADCEEDEDDEYEDTPVLSCTRPPHSPSSPDIDCVFHSDSEMSSQKEQKRIQKTMSSGDLGKMDSLRKSMSQTDSRVRGKMRFWSKSKHGDKKISSRGRSADSELTDRRNDSPPGSPEHAGVSERRRDSKENREPMLGMMSMKRRRSLKISSVSLESTAWQNDALHILTSTADYRSMNDFLMKKISDLDAEDGQKDTAVDVVFKKALKEFRLNIFNSYSTALAMDDGRSIRYKDLYALFEHILEKSMRLEQRDWSESPVKVWVNTFKVFLDEFMTEYKPMDGTISKAPKPERKKRRKKESDTVEEHMGHIFKSTQYSIPTYCEFCSSLIWMMDKACVCKLCRYACHKKCCLRMTTKCSKKFDPELSSRQFGVELSRLTSDERSVPLVVEKLINYIEMHGLYTEGIYRKSGSTNKIKELKQGLDTDANSVNLDDYNIHVIASVLKQWLRDLPNPLMTFELYEEFLRAMGLQDKREVVQGVYSIIDQLSRTHLNTLERLIFHLVRISFQEETNRMSANALAIVFAPCILRCPDTTDPLQSVRDISKTTACVELIICEQMRKYKARLKDINTLEFAENKAKSRLTHIRRSMGKSRARKSGHHTPSPPLSPRASEREEPVDEGAEPVLSEQQQAAMQQEEKVLTQQIENLQKEKEELTYEMLALEPRASDDEMLESEASIGTADSSENLMESEGAASDPWEKSPGAVSASRWRKSESKSRRCLRRQPESLDSVDSAVASLSSVSSTPHYRFRSSSSGPLFSSSSPTGDLHILPDPESCEQASLSARCASSSEKTRPRPRANRSCPPKPREPGDTGGRRREHEFGSSQPLVLYGSNEFMV.

The region spanning 16–114 is the Ras-associating domain; it reads SEFTLRVYPG…YRFLLREKNL (99 aa). Residues 148–971 enclose the Myosin motor domain; that stretch reads AQFVADLCSL…LRQRLQDELH (824 aa). A helical membrane pass occupies residues 178–198; it reads IYTYVGSILIAVNPFKFLPIY. 242 to 249 is an ATP binding site; it reads GESGSGKT. The interval 853 to 875 is actin-binding; the sequence is LNKLMETLGQSEPYFVKCIRSNA. IQ domains lie at 976–996, 1025–1054, 1066–1095, and 1089–1118; these read RRIVCLQRSFRTQRDRKHFCR, QQGAALRLQAVWRGFRARRLYLQQRRAVLI, RNTAATLIQAVWRTRTHRRSFLQQRRAAVT, and QRRAAVTLQAACRGQQSRQRCRILREQQCR. Positions 976–1113 are neck or regulatory domain; the sequence is RRIVCLQRSF…QSRQRCRILR (138 aa). Residues 1114–2254 form a tail region; that stretch reads EQQCREQSKH…PRANRSCPPK (1141 aa). 4 disordered regions span residues 1118-1279, 1308-1341, 1455-1588, and 1732-1754; these read REQS…QIRE, DVPLSNGESASDCSIIPEPRTNHELDTGSSFSVS, CEED…EPML, and DGTISKAPKPERKKRRKKESDTV. A compositionally biased stretch (polar residues) spans 1123–1133; the sequence is HPSTVTKSLHQ. A compositionally biased stretch (basic and acidic residues) spans 1134 to 1149; that stretch reads NTEEAEKLEEVWEKQT. Residues 1263 to 1273 are compositionally biased toward polar residues; it reads PINSAPQTPNR. Over residues 1455–1465 the composition is skewed to acidic residues; that stretch reads CEEDEDDEYED. Residues 1485–1501 are compositionally biased toward basic and acidic residues; that stretch reads CVFHSDSEMSSQKEQKR. Basic residues predominate over residues 1529 to 1542; sequence RGKMRFWSKSKHGD. Basic and acidic residues-rich tracts occupy residues 1550–1562 and 1572–1585; these read RSADSELTDRRND and GVSERRRDSKENRE. The segment at 1759–1808 adopts a Phorbol-ester/DAG-type zinc-finger fold; sequence GHIFKSTQYSIPTYCEFCSSLIWMMDKACVCKLCRYACHKKCCLRMTTKC. One can recognise a Rho-GAP domain in the interval 1823–2011; sequence VELSRLTSDE…LIICEQMRKY (189 aa). Over residues 2032-2049 the composition is skewed to basic residues; sequence LTHIRRSMGKSRARKSGH. 2 disordered regions span residues 2032-2087 and 2113-2286; these read LTHI…QQEE and PRAS…EFMV. Positions 2080–2107 form a coiled coil; it reads QAAMQQEEKVLTQQIENLQKEKEELTYE. 2 stretches are compositionally biased toward low complexity: residues 2176–2192 and 2200–2211; these read SLDSVDSAVASLSSVSS and SSSSGPLFSSSS. Over residues 2226 to 2238 the composition is skewed to polar residues; sequence EQASLSARCASSS. Residues 2254-2270 show a composition bias toward basic and acidic residues; it reads KPREPGDTGGRRREHEF.

It belongs to the TRAFAC class myosin-kinesin ATPase superfamily. Myosin family.

The protein localises to the membrane. It is found in the cytoplasm. It localises to the synapse. Its subcellular location is the cell projection. The protein resides in the growth cone. Functionally, myosins are actin-based motor molecules with ATPase activity. Unconventional myosins serve in intracellular movements. Regulates Rho by stimulating it's GTPase activity in neurons. Required for the regulation of neurite branching and motor neuron axon guidance. In Danio rerio (Zebrafish), this protein is Unconventional myosin-IXAb (myo9ab).